Reading from the N-terminus, the 599-residue chain is NADH-quinone oxidoreductase subunit C/D (599 aa).

The interval 1-189 is NADH dehydrogenase I subunit C; sequence MTELMTQNSA…DPFVLTKQKE (189 aa). The NADH dehydrogenase I subunit D stretch occupies residues 213–599; it reads DFMFLNLGPN…IDFVMSDVDR (387 aa).

The protein in the N-terminal section; belongs to the complex I 30 kDa subunit family. It in the C-terminal section; belongs to the complex I 49 kDa subunit family. As to quaternary structure, NDH-1 is composed of 13 different subunits. Subunits NuoB, CD, E, F, and G constitute the peripheral sector of the complex.

Its subcellular location is the cell inner membrane. It carries out the reaction a quinone + NADH + 5 H(+)(in) = a quinol + NAD(+) + 4 H(+)(out). Functionally, NDH-1 shuttles electrons from NADH, via FMN and iron-sulfur (Fe-S) centers, to quinones in the respiratory chain. The immediate electron acceptor for the enzyme in this species is believed to be ubiquinone. Couples the redox reaction to proton translocation (for every two electrons transferred, four hydrogen ions are translocated across the cytoplasmic membrane), and thus conserves the redox energy in a proton gradient. This Sodalis glossinidius (strain morsitans) protein is NADH-quinone oxidoreductase subunit C/D.